We begin with the raw amino-acid sequence, 373 residues long: Chorismate synthase (373 aa).

R46 is a binding site for NADP(+). Residues 123–125 (RSS), 251–252 (NA), G295, 310–314 (KPTPS), and R337 contribute to the FMN site.

It belongs to the chorismate synthase family. The cofactor is FMNH2.

It catalyses the reaction 5-O-(1-carboxyvinyl)-3-phosphoshikimate = chorismate + phosphate. It functions in the pathway metabolic intermediate biosynthesis; chorismate biosynthesis; chorismate from D-erythrose 4-phosphate and phosphoenolpyruvate: step 7/7. Functionally, catalyzes the anti-1,4-elimination of the C-3 phosphate and the C-6 proR hydrogen from 5-enolpyruvylshikimate-3-phosphate (EPSP) to yield chorismate, which is the branch point compound that serves as the starting substrate for the three terminal pathways of aromatic amino acid biosynthesis. This reaction introduces a second double bond into the aromatic ring system. This Methanococcus maripaludis (strain DSM 14266 / JCM 13030 / NBRC 101832 / S2 / LL) protein is Chorismate synthase.